A 491-amino-acid polypeptide reads, in one-letter code: Hydroxymethylglutaryl-CoA synthase (491 aa).

Residue Glu-127 is the Proton donor/acceptor of the active site. Cys-159 serves as the catalytic Acyl-thioester intermediate. (3S)-3-hydroxy-3-methylglutaryl-CoA is bound by residues Cys-159, Thr-201, and Ser-250. Ser-276 is subject to Phosphoserine. Residue His-296 is the Proton donor/acceptor of the active site. (3S)-3-hydroxy-3-methylglutaryl-CoA contacts are provided by His-296, Lys-305, Asn-371, and Ser-405.

This sequence belongs to the thiolase-like superfamily. HMG-CoA synthase family.

It catalyses the reaction acetoacetyl-CoA + acetyl-CoA + H2O = (3S)-3-hydroxy-3-methylglutaryl-CoA + CoA + H(+). Its pathway is metabolic intermediate biosynthesis; (R)-mevalonate biosynthesis; (R)-mevalonate from acetyl-CoA: step 2/3. In terms of biological role, hydroxymethylglutaryl-CoA synthase; part of the first module of ergosterol biosynthesis pathway that includes the early steps of the pathway, conserved across all eukaryotes, and which results in the formation of mevalonate from acetyl-coenzyme A (acetyl-CoA). ERG13 condenses acetyl-CoA with acetoacetyl-CoA to form hydroxymethylglutaryl-CoA (HMG-CoA). The first module starts with the action of the cytosolic acetyl-CoA acetyltransferase ERG10 that catalyzes the formation of acetoacetyl-CoA. The hydroxymethylglutaryl-CoA synthase ERG13 then condenses acetyl-CoA with acetoacetyl-CoA to form HMG-CoA. The rate-limiting step of the early module is the reduction to mevalonate by the 3-hydroxy-3-methylglutaryl-coenzyme A (HMG-CoA) reductases HMG1 and HMG2 which are derived from a single ancestral HMGR gene by gene duplication. The chain is Hydroxymethylglutaryl-CoA synthase from Saccharomyces cerevisiae (strain ATCC 204508 / S288c) (Baker's yeast).